Reading from the N-terminus, the 1377-residue chain is Carboxypeptidase D (1377 aa).

Positions 1–37 (MASGRDERPPWRLGRLRLLPPPPLLLLLLLLRSSAQA) are cleaved as a signal peptide. Residues 38–1296 (AHIKKAEATT…DNRIFGLPRE (1259 aa)) lie on the Extracellular side of the membrane. The 318-residue stretch at 62–379 (HYYHEAALGE…ESLITLIEKV (318 aa)) folds into the Peptidase M14 1 domain. Positions 138 and 141 each coordinate Zn(2+). The Cell attachment site signature appears at 161–163 (RGD). 2 N-linked (GlcNAc...) asparagine glycosylation sites follow: Asn171 and Asn216. Residues 188–231 (RAREGDCGLGDSGPPGTSGRDNSRGRDLNRSFPDQFSTGEPPSL) form a disordered region. Zn(2+) is bound at residue His256. Tyr264 carries the phosphotyrosine modification. Ser269 bears the Phosphoserine mark. Residue Glu349 is the Proton donor/acceptor of the active site. Residues Asn398, Asn409, Asn428, and Asn521 are each glycosylated (N-linked (GlcNAc...) asparagine). A Peptidase M14 2 domain is found at 501-791 (HHHHFPDMEI…RSLIQFMKQV (291 aa)). The Zn(2+) site is built by His563 and Glu566. A glycan (N-linked (GlcNAc...) asparagine) is linked at Asn625. His670 provides a ligand contact to Zn(2+). The active-site Proton donor/acceptor is Glu761. Asn810, Asn854, Asn866, Asn878, Asn952, and Asn975 each carry an N-linked (GlcNAc...) asparagine glycan. A disordered region spans residues 874–898 (ADANNESKKGRGHSTSTDDTSDPTS). The Peptidase M14 3 domain occupies 929 to 1208 (RYHSYKDLSE…KSLLSMLVEV (280 aa)). A compositionally biased stretch (basic and acidic residues) spans 1038-1047 (RERAQEKDCT). The interval 1038-1064 (RERAQEKDCTSKTGHTNAHGKDLDTDF) is disordered. N-linked (GlcNAc...) asparagine glycans are attached at residues Asn1067 and Asn1139. A helical membrane pass occupies residues 1297–1317 (LVVTVSGATMSALILTACIIW). Residues Cys1314, Cys1318, and Cys1320 are each lipidated (S-palmitoyl cysteine). Over 1318-1377 (CICSIKSNRHKDGFHRLRQHHDEYEDEIRMMSTGSKKSLLSHEFQDETDTEEETLYSSKH) the chain is Cytoplasmic. Phosphoserine is present on residues Ser1355 and Ser1358. The disordered stretch occupies residues 1356 to 1377 (LLSHEFQDETDTEEETLYSSKH). 2 positions are modified to phosphothreonine: Thr1365 and Thr1367.

Belongs to the peptidase M14 family. It depends on Zn(2+) as a cofactor.

It localises to the cell membrane. The catalysed reaction is Releases C-terminal Arg and Lys from polypeptides.. This Mus musculus (Mouse) protein is Carboxypeptidase D (Cpd).